A 691-amino-acid chain; its full sequence is DNA ligase (691 aa).

NAD(+) contacts are provided by residues Asp-41–Asp-45, Ser-90–Leu-91, and Glu-130. Lys-132 acts as the N6-AMP-lysine intermediate in catalysis. NAD(+) contacts are provided by Arg-153, Glu-190, Lys-307, and Lys-331. Residues Cys-425, Cys-428, Cys-443, and Cys-449 each contribute to the Zn(2+) site. The BRCT domain occupies Ala-610–Arg-691.

This sequence belongs to the NAD-dependent DNA ligase family. LigA subfamily. It depends on Mg(2+) as a cofactor. Mn(2+) serves as cofactor.

It catalyses the reaction NAD(+) + (deoxyribonucleotide)n-3'-hydroxyl + 5'-phospho-(deoxyribonucleotide)m = (deoxyribonucleotide)n+m + AMP + beta-nicotinamide D-nucleotide.. In terms of biological role, DNA ligase that catalyzes the formation of phosphodiester linkages between 5'-phosphoryl and 3'-hydroxyl groups in double-stranded DNA using NAD as a coenzyme and as the energy source for the reaction. It is essential for DNA replication and repair of damaged DNA. The polypeptide is DNA ligase (Burkholderia pseudomallei (strain K96243)).